The primary structure comprises 193 residues: T-cell receptor-associated transmembrane adapter 1 (193 aa).

The Extracellular portion of the chain corresponds to 1–10 (MSGNAECHFS). Residues 11–31 (IWAILAFLGLALTISLIFNIF) traverse the membrane as a helical; Signal-anchor for type III membrane protein segment. The Cytoplasmic segment spans residues 32–193 (HCVEKQRQEK…LHSLDYDLAQ (162 aa)). Residue Ser-46 is modified to Phosphoserine. Tyr-80 carries the post-translational modification Phosphotyrosine. The tract at residues 80–83 (YEQM) is interaction with PIK3R1. The disordered stretch occupies residues 116 to 166 (NEGKRRKPRKQKSHLSDKDEEGQMHAKDISLSKTTLVDSYPPESEAIEENI). A compositionally biased stretch (basic residues) spans 119-128 (KRRKPRKQKS). Residues 129–145 (HLSDKDEEGQMHAKDIS) are compositionally biased toward basic and acidic residues.

In terms of assembly, homodimer; disulfide-linked. Interacts with CD3Z. When phosphorylated, interacts with PIK3R1. Phosphorylated on tyrosines upon TCR activation.

It is found in the cell membrane. Its function is as follows. Stabilizes the TCR (T-cell antigen receptor)/CD3 complex at the surface of T-cells. The polypeptide is T-cell receptor-associated transmembrane adapter 1 (TRAT1) (Bos taurus (Bovine)).